We begin with the raw amino-acid sequence, 252 residues long: Protein PYRAB15930 (252 aa).

Belongs to the CinA family.

The sequence is that of Protein PYRAB15930 from Pyrococcus abyssi (strain GE5 / Orsay).